A 568-amino-acid polypeptide reads, in one-letter code: Transport inhibitor response 1-like protein Os11g0515500 (568 aa).

An F-box domain is found at 1–45 (MVFFPEEVVEHILGFLASHRDRNAVSLVCREWYRVERLSRRSVLV). 1D-myo-inositol hexakisphosphate-binding positions include Lys-69, 103–104 (KR), and Arg-335. The tract at residues 338-343 (PANANA) is interaction with auxin-responsive proteins. 390-392 (SFR) lines the 1D-myo-inositol hexakisphosphate pocket. The segment at 394–398 (CVLDP) is interaction with auxin-responsive proteins. Position 425 (Arg-425) interacts with 1D-myo-inositol hexakisphosphate. The segment at 453-454 (AF) is interaction with auxin-responsive proteins. Residues 473–474 (KK) and Arg-498 each bind 1D-myo-inositol hexakisphosphate.

In terms of assembly, part of a SCF (SKP1-cullin-F-box) protein ligase complex. May interact with auxin and auxin-responsive proteins.

Its subcellular location is the nucleus. The protein operates within protein modification; protein ubiquitination. This chain is Transport inhibitor response 1-like protein Os11g0515500, found in Oryza sativa subsp. japonica (Rice).